A 545-amino-acid polypeptide reads, in one-letter code: Chaperonin GroEL (545 aa).

ATP is bound by residues 29-32, lysine 50, 86-90, glycine 415, and aspartate 495; these read TLGP and DGTTT.

Belongs to the chaperonin (HSP60) family. In terms of assembly, forms a cylinder of 14 subunits composed of two heptameric rings stacked back-to-back. Interacts with the co-chaperonin GroES.

The protein localises to the cytoplasm. The catalysed reaction is ATP + H2O + a folded polypeptide = ADP + phosphate + an unfolded polypeptide.. Functionally, together with its co-chaperonin GroES, plays an essential role in assisting protein folding. The GroEL-GroES system forms a nano-cage that allows encapsulation of the non-native substrate proteins and provides a physical environment optimized to promote and accelerate protein folding. The polypeptide is Chaperonin GroEL (Bacteroides fragilis (strain ATCC 25285 / DSM 2151 / CCUG 4856 / JCM 11019 / LMG 10263 / NCTC 9343 / Onslow / VPI 2553 / EN-2)).